A 359-amino-acid polypeptide reads, in one-letter code: CCAAT/enhancer-binding protein alpha (359 aa).

A disordered region spans residues 1–55 (MESADFYEVEPRPPMSSHLQSPPHAPSNAAFGFPRGAGPAPPPAPPAAPEPLGGI). A required to repress E2F1:TFDP1-mediated transcription, to inhibit cell cycle and to induce adipocyte differentiation region spans residues 1–70 (MESADFYEVE…SIDISAYIDP (70 aa)). The span at 29–38 (AAFGFPRGAG) shows a compositional bias: low complexity. Pro residues predominate over residues 39 to 49 (PAPPPAPPAAP). The segment at 54-72 (GICEHETSIDISAYIDPAA) is required for interaction with TRIB1. Positions 126 to 200 (PPGYGCAAAG…HASPAHLAAP (75 aa)) are required to induce adipocyte differentiation. At Lys-159 the chain carries N6-acetyllysine; alternate. Residue Lys-159 forms a Glycyl lysine isopeptide (Lys-Gly) (interchain with G-Cter in SUMO); alternate linkage. Residue Lys-159 forms a Glycyl lysine isopeptide (Lys-Gly) (interchain with G-Cter in SUMO2); alternate linkage. 2 disordered regions span residues 176-195 (LFPY…ASPA) and 213-293 (TMHL…RERN). Over residues 179-191 (YQPPPPPPPPHPH) the composition is skewed to pro residues. Residues 180 to 194 (QPPPPPPPPHPHASP) form a required to functionally cooperate with SREBF1 in promoter activation region. Phosphoserine is present on Ser-193. The segment covering 220–232 (HPTPPPTPVPSPH) has biased composition (pro residues). 2 positions are modified to phosphothreonine; by GSK3: Thr-222 and Thr-226. Ser-230 is subject to Phosphoserine; by GSK3. Positions 233-255 (AAPALGAAGLPGPGSALKGLAGA) are enriched in low complexity. An interaction with FOXO1 region spans residues 240–359 (AGLPGPGSAL…SLVKAMGNCA (120 aa)). The span at 261–272 (TGGGGGGSGAGA) shows a compositional bias: gly residues. Positions 277-293 (KSVDKNSNEYRVRRERN) are enriched in basic and acidic residues. A bZIP domain is found at 283–346 (SNEYRVRRER…DTLRGIFRQL (64 aa)). A DNA-binding region spans residues 286 to 301 (YRVRRERNNIAVRKSR). A basic motif region spans residues 287–314 (RVRRERNNIAVRKSRDKAKQRNVETQQK). The segment at 318–346 (LTSDNDRLRKRVEQLSRELDTLRGIFRQL) is leucine-zipper.

The protein belongs to the bZIP family. C/EBP subfamily. As to quaternary structure, binds DNA as a homodimer and as a heterodimer. Can form stable heterodimers with CEBPB, CEBPD, CEBPE and CEBPG. Interacts with PRDM16. Interacts with UBN1. Interacts with ZNF638; this interaction increases transcriptional activation. Interacts with the complex TFDP2:E2F1; the interaction prevents CEBPA binding to target gene promoters and represses its transcriptional activity. Interacts with RB1. Interacts (when phosphorylated at Ser-193) with CDK2, CDK4, E2F4 and SMARCA2. Interacts with SREBPF1. Interacts with FOXO1 (via the Fork-head domain); the interaction increases when FOXO1 is deacetylated. Interacts with SIX1. Interacts (via recognition sequence) with TRIB1. Interacts (via bZIP domain) with OVOL2 (via zinc-finger domains); the interaction inhibits the transcription factor activity of CEBPA and is required to repress adipogenesis. Interacts with TAF1A and UBTF. In terms of assembly, interacts with TAF1A and UBTF. Interacts with NPM1. Post-translationally, sumoylated, sumoylation blocks the inhibitory effect on cell proliferation by disrupting the interaction with SMARCA2. Phosphorylation at Ser-193 is required for interaction with CDK2, CDK4 and SWI/SNF complex leading to cell cycle inhibition. Dephosphorylated at Ser-193 by protein phosphatase 2A (PP2A) through PI3K/AKT signaling pathway regulation. Phosphorylation at Thr-222 and Thr-226 by GSK3 is constitutive in adipose tissue and lung. In liver, both Thr-222 and Thr-226 are phosphorylated only during feeding but not during fasting. Phosphorylation of the GSK3 consensus sites selectively decreases transactivation activity on IRE-controlled promoters. In terms of processing, ubiquitinated by COP1 upon interaction with TRIB1. In terms of tissue distribution, isoform 2 and isoform 3 are expressed in adipose tissue and liver (at protein level).

The protein localises to the nucleus. It localises to the nucleolus. Functionally, transcription factor that coordinates proliferation arrest and the differentiation of myeloid progenitors, adipocytes, hepatocytes, and cells of the lung and the placenta. Binds directly to the consensus DNA sequence 5'-T[TG]NNGNAA[TG]-3' acting as an activator on distinct target genes. During early embryogenesis, plays essential and redundant functions with CEBPB. Essential for the transition from common myeloid progenitors (CMP) to granulocyte/monocyte progenitors (GMP). Critical for the proper development of the liver and the lung. Necessary for terminal adipocyte differentiation, is required for postnatal maintenance of systemic energy homeostasis and lipid storage. To regulate these different processes at the proper moment and tissue, interplays with other transcription factors and modulators. Down-regulates the expression of genes that maintain cells in an undifferentiated and proliferative state through E2F1 repression, which is critical for its ability to induce adipocyte and granulocyte terminal differentiation. Reciprocally E2F1 blocks adipocyte differentiation by binding to specific promoters and repressing CEBPA binding to its target gene promoters. Proliferation arrest also depends on a functional binding to SWI/SNF complex. In liver, regulates gluconeogenesis and lipogenesis through different mechanisms. To regulate gluconeogenesis, functionally cooperates with FOXO1 binding to IRE-controlled promoters and regulating the expression of target genes such as PCK1 or G6PC1. To modulate lipogenesis, interacts and transcriptionally synergizes with SREBF1 in promoter activation of specific lipogenic target genes such as ACAS2. In adipose tissue, seems to act as FOXO1 coactivator accessing to ADIPOQ promoter through FOXO1 binding sites. Can act as dominant-negative. Binds DNA and have transctivation activity, even if much less efficiently than isoform 2. Does not inhibit cell proliferation. In terms of biological role, directly and specifically enhances ribosomal DNA transcription interacting with RNA polymerase I-specific cofactors and inducing histone acetylation. The polypeptide is CCAAT/enhancer-binding protein alpha (Mus musculus (Mouse)).